Consider the following 479-residue polypeptide: MFLFDIYNNILYYTKEFIVTSTSPNLFIHGLMAVFIIYLLTKRPFKPRQNDTLTKAEEDELIREWSPIPLTPKSNPLEVLNQTELIIQESEGTHVTINNKKYLNLARSNYLGLINNPEINKISENAIRKYGVGSCGPRGFYGTIDVHLDLEKKTASFMKTPEAVLYSSAYATISSAIPSFSKIGDIIIVDRGVSQPVQVGVSLSRSRIYYFNHNDMDDLQRVLEQTQFKGSKAKIVRKFVVIEGLYYNSGTIAPLPQILKFKEQYKFRLIMDESHSVGVLGSTGRGLTEHYNIDTNLVDILTGSYGNSFSSGGGFCCGSPEVVYHQRLNGVGYVFSASLPPFLACSSTKAIEMLEENPKMLEMLHSNIGELYQGLNKSGALNGLLEITSLPISPVIHLSLLDSKSNKSNRINDELLLQKIVDKAMDYGLLLTRAKYVSAEKFIPKPSIRISVSSNLSSDQIKQSIEIIKKCTSFVLESN.

The Lumenal portion of the chain corresponds to 1–16; the sequence is MFLFDIYNNILYYTKE. A helical membrane pass occupies residues 17-37; it reads FIVTSTSPNLFIHGLMAVFII. Residues 38–479 lie on the Cytoplasmic side of the membrane; it reads YLLTKRPFKP…KCTSFVLESN (442 aa).

It belongs to the class-II pyridoxal-phosphate-dependent aminotransferase family. As to quaternary structure, forms a heterodimer with sptB. It depends on pyridoxal 5'-phosphate as a cofactor.

Its subcellular location is the endoplasmic reticulum membrane. The catalysed reaction is L-serine + hexadecanoyl-CoA + H(+) = 3-oxosphinganine + CO2 + CoA. Its pathway is lipid metabolism; sphingolipid metabolism. In terms of biological role, component of serine palmitoyltransferase (SPT), which catalyzes the committed step in the synthesis of sphingolipids, the condensation of serine with palmitoyl CoA to form the long chain base 3-ketosphinganine. The polypeptide is Serine palmitoyltransferase 1 (sptA) (Dictyostelium discoideum (Social amoeba)).